The primary structure comprises 131 residues: Fumarate reductase subunit C (131 aa).

The next 3 membrane-spanning stretches (helical) occupy residues 30 to 50 (EGTC…VFAL), 58 to 78 (AGFV…VTLI), and 109 to 129 (IVRG…AVAL).

The protein belongs to the FrdC family. In terms of assembly, part of an enzyme complex containing four subunits: a flavoprotein (FrdA), an iron-sulfur protein (FrdB), and two hydrophobic anchor proteins (FrdC and FrdD).

It localises to the cell inner membrane. Two distinct, membrane-bound, FAD-containing enzymes are responsible for the catalysis of fumarate and succinate interconversion; fumarate reductase is used in anaerobic growth, and succinate dehydrogenase is used in aerobic growth. Anchors the catalytic components of the fumarate reductase complex to the cell inner membrane, binds quinones. This is Fumarate reductase subunit C from Proteus vulgaris.